Here is a 191-residue protein sequence, read N- to C-terminus: Leucyl/phenylalanyl-tRNA--protein transferase (191 aa).

Belongs to the L/F-transferase family.

It is found in the cytoplasm. It catalyses the reaction N-terminal L-lysyl-[protein] + L-leucyl-tRNA(Leu) = N-terminal L-leucyl-L-lysyl-[protein] + tRNA(Leu) + H(+). The enzyme catalyses N-terminal L-arginyl-[protein] + L-leucyl-tRNA(Leu) = N-terminal L-leucyl-L-arginyl-[protein] + tRNA(Leu) + H(+). It carries out the reaction L-phenylalanyl-tRNA(Phe) + an N-terminal L-alpha-aminoacyl-[protein] = an N-terminal L-phenylalanyl-L-alpha-aminoacyl-[protein] + tRNA(Phe). Functions in the N-end rule pathway of protein degradation where it conjugates Leu, Phe and, less efficiently, Met from aminoacyl-tRNAs to the N-termini of proteins containing an N-terminal arginine or lysine. This is Leucyl/phenylalanyl-tRNA--protein transferase from Nostoc punctiforme (strain ATCC 29133 / PCC 73102).